The sequence spans 435 residues: Thiosulfate sulfurtransferase YnjE (435 aa).

The first 23 residues, 1–23 (MKRVSQMTALAMALGLACASSWA), serve as a signal peptide directing secretion. 3 Rhodanese domains span residues 36-138 (QQQN…RLQK), 164-270 (PAGD…PVER), and 304-425 (HRQD…NPVA). C385 serves as the catalytic Cysteine persulfide intermediate. A substrate-binding site is contributed by R390.

In terms of assembly, monomer.

It is found in the periplasm. The enzyme catalyses thiosulfate + hydrogen cyanide = thiocyanate + sulfite + 2 H(+). This chain is Thiosulfate sulfurtransferase YnjE (ynjE), found in Escherichia coli (strain K12).